A 418-amino-acid chain; its full sequence is Serine hydroxymethyltransferase (418 aa).

(6S)-5,6,7,8-tetrahydrofolate contacts are provided by residues Leu-117 and 121-123 (GHL). N6-(pyridoxal phosphate)lysine is present on Lys-225.

The protein belongs to the SHMT family. In terms of assembly, homodimer. Pyridoxal 5'-phosphate serves as cofactor.

Its subcellular location is the cytoplasm. It catalyses the reaction (6R)-5,10-methylene-5,6,7,8-tetrahydrofolate + glycine + H2O = (6S)-5,6,7,8-tetrahydrofolate + L-serine. It functions in the pathway one-carbon metabolism; tetrahydrofolate interconversion. The protein operates within amino-acid biosynthesis; glycine biosynthesis; glycine from L-serine: step 1/1. Functionally, catalyzes the reversible interconversion of serine and glycine with tetrahydrofolate (THF) serving as the one-carbon carrier. This reaction serves as the major source of one-carbon groups required for the biosynthesis of purines, thymidylate, methionine, and other important biomolecules. Also exhibits THF-independent aldolase activity toward beta-hydroxyamino acids, producing glycine and aldehydes, via a retro-aldol mechanism. In Mycoplasma mobile (strain ATCC 43663 / 163K / NCTC 11711) (Mesomycoplasma mobile), this protein is Serine hydroxymethyltransferase.